The primary structure comprises 402 residues: Putative RNA-guided DNA endonuclease (402 aa).

D188 is a catalytic residue. The segment at 202-239 is disordered; that stretch reads KITNPKHERRDRARLAKAQRDVSRKAKGSANRKKARRK. A compositionally biased stretch (basic and acidic residues) spans 204–225; that stretch reads TNPKHERRDRARLAKAQRDVSR. A compositionally biased stretch (basic residues) spans 226–239; the sequence is KAKGSANRKKARRK. E272 is an active-site residue. The Zn(2+) site is built by C325, C328, C344, and C346. D353 is a catalytic residue. Positions 373–402 are disordered; sequence GIRPQRESSRTGRSSVKQEPQRATAGIPRL.

In the N-terminal section; belongs to the transposase 2 family. It in the C-terminal section; belongs to the transposase 35 family.

In terms of biological role, an RNA-guided dsDNA endonuclease. When guided by an RNA derived from the right-end element of its insertion sequence element (IS), cleaves DNA downstream of the transposon-associated motif (TAM). Cleaves supercoiled and linear DNA in a staggered manner 15-21 bases from the TAM yielding 5'-overhangs. Binds reRNA, an approximately 150 nucleotide base sRNA derived from the 3' end of its own gene, the right end (RE) of the insertion sequence (IS) plus sequence downstream of the IS. This Streptomyces pristinaespiralis protein is Putative RNA-guided DNA endonuclease.